We begin with the raw amino-acid sequence, 50 residues long: Tubulin alpha chain (50 aa).

Asn28 contributes to the GTP binding site. Glu40 is an active-site residue.

The protein belongs to the tubulin family. In terms of assembly, dimer of alpha and beta chains. A typical microtubule is a hollow water-filled tube with an outer diameter of 25 nm and an inner diameter of 15 nM. Alpha-beta heterodimers associate head-to-tail to form protofilaments running lengthwise along the microtubule wall with the beta-tubulin subunit facing the microtubule plus end conferring a structural polarity. Microtubules usually have 13 protofilaments but different protofilament numbers can be found in some organisms and specialized cells. It depends on Mg(2+) as a cofactor.

The protein resides in the cytoplasm. It localises to the cytoskeleton. It carries out the reaction GTP + H2O = GDP + phosphate + H(+). Tubulin is the major constituent of microtubules, a cylinder consisting of laterally associated linear protofilaments composed of alpha- and beta-tubulin heterodimers. Microtubules grow by the addition of GTP-tubulin dimers to the microtubule end, where a stabilizing cap forms. Below the cap, tubulin dimers are in GDP-bound state, owing to GTPase activity of alpha-tubulin. The protein is Tubulin alpha chain of Populus euphratica (Euphrates poplar).